The primary structure comprises 313 residues: Ribosomal protein L11 methyltransferase (313 aa).

S-adenosyl-L-methionine-binding residues include T164, G185, D207, and N249.

It belongs to the methyltransferase superfamily. PrmA family.

The protein localises to the cytoplasm. The catalysed reaction is L-lysyl-[protein] + 3 S-adenosyl-L-methionine = N(6),N(6),N(6)-trimethyl-L-lysyl-[protein] + 3 S-adenosyl-L-homocysteine + 3 H(+). Its function is as follows. Methylates ribosomal protein L11. The protein is Ribosomal protein L11 methyltransferase of Clostridium botulinum (strain Eklund 17B / Type B).